The chain runs to 1199 residues: Ecdysone-induced protein 75B, isoforms C/D (1199 aa).

Positions 130–182 (TTDGPTAVLQQQQPQQQMPQHFESLPHHHPQQEHQPQQQQQQHHLQHHPHPHV) are disordered. Low complexity-rich tracts occupy residues 139–149 (QQQQPQQQMPQ) and 162–172 (EHQPQQQQQQH). A DNA-binding region (nuclear receptor) is located at residues 242 to 318 (TVLCRVCGDK…VGMSRDAVRF (77 aa)). NR C4-type zinc fingers lie at residues 245–265 (CRVCGDKASGFHYGVHSCEGC) and 282–306 (CTKNQQCSILRINRNRCQYCRLKKC). The 249-residue stretch at 352–600 (DQPRLLAAVL…QQMWSMEDGN (249 aa)) folds into the NR LBD domain. Disordered regions lie at residues 624-665 (KSPL…SALA), 771-808 (LDSPTDSGIESGNEKNECKAVSSGGSSSCSSPRSSVDD), 831-851 (VSVSPVRSPQPSTSSHLKRQI), 895-961 (AEAD…SSHS), 991-1104 (ENST…SNSA), and 1155-1188 (VTVTASNGGPPSAAASPAPSSSPPASVGSPNPGL). 5 stretches are compositionally biased toward low complexity: residues 641-653 (GSPSSSQPQGVSL), 792-804 (SSGGSSSCSSPRS), 831-845 (VSVSPVRSPQPSTSS), 897-942 (ADAS…AQSQ), and 950-961 (SSPKASMASSHS). Composition is skewed to polar residues over residues 993 to 1006 (STAASSTTNGVGNR) and 1018 to 1040 (AVQNQQRWGSSSVITTTCQQRQQ). Composition is skewed to low complexity over residues 1041–1077 (SVSPHSNGSSSSSSSSSSSSSSSSSTSSNCSSSSASS), 1086–1104 (STSNGTSAPASSSSGSNSA), and 1159–1187 (ASNGGPPSAAASPAPSSSPPASVGSPNPG).

The protein belongs to the nuclear hormone receptor family. NR1 subfamily.

It localises to the nucleus. In terms of biological role, implicated in the regulation of ecdysone-triggered gene hierarchies. Probably plays a key role in mediating the regulation of the larval molt by 20-OH-ecdysone. The protein is Ecdysone-induced protein 75B, isoforms C/D (Eip75B) of Drosophila melanogaster (Fruit fly).